Consider the following 351-residue polypeptide: Fe(3+) ions import ATP-binding protein FbpC (351 aa).

Residues 7-237 (VVLKNVCKRF…PSSMFMANFM (231 aa)) form the ABC transporter domain. 39 to 46 (GPSGCGKT) serves as a coordination point for ATP.

The protein belongs to the ABC transporter superfamily. Fe(3+) ion importer (TC 3.A.1.10) family. As to quaternary structure, the complex is composed of two ATP-binding proteins (FbpC), two transmembrane proteins (FbpB) and a solute-binding protein (FbpA).

The protein localises to the cell inner membrane. The catalysed reaction is Fe(3+)(out) + ATP + H2O = Fe(3+)(in) + ADP + phosphate + H(+). Part of the ABC transporter complex FbpABC involved in Fe(3+) ions import. Responsible for energy coupling to the transport system. The sequence is that of Fe(3+) ions import ATP-binding protein FbpC from Photobacterium profundum (strain SS9).